We begin with the raw amino-acid sequence, 636 residues long: Golgin subfamily A member 8F (636 aa).

2 disordered regions span residues 1-72 and 107-127; these read MAEE…SATL and NKQVEHQLEEEKKANNEKQKA. Residues 38-50 show a composition bias toward polar residues; it reads TNGSIHETATSGG. Coiled coils occupy residues 93-148, 211-263, and 306-412; these read VSQL…LNTD, LEQS…MSQE, and EVEL…QQKQ. The segment covering 109 to 127 has biased composition (basic and acidic residues); the sequence is QVEHQLEEEKKANNEKQKA. Disordered regions lie at residues 344–364, 422–449, 496–537, and 588–612; these read LREQEERLQEQQERLPEQEER, ALPGEGDGGGHLDSEGEEAPRPIPSIPQ, PITK…GVAA, and PVQGEAREGSPHDNPTAQPIVQDHQ. A compositionally biased stretch (basic and acidic residues) spans 429 to 441; sequence GGGHLDSEGEEAP. The span at 509–522 shows a compositional bias: gly residues; that stretch reads PGGGHHQAGPGQGG.

This sequence belongs to the GOLGA8 family.

This is Golgin subfamily A member 8F from Homo sapiens (Human).